A 547-amino-acid chain; its full sequence is Solute carrier family 22 member 7 (547 aa).

A helical transmembrane segment spans residues Val21–Leu41. A compositionally biased stretch (polar residues) spans Asn91–Glu103. A disordered region spans residues Asn91–Val112. Helical transmembrane passes span Ala145–Ser165, Val179–Ile199, Leu203–Leu223, Val233–Ile253, Trp258–Pro278, Ile345–Leu365, Leu367–Pro387, Leu403–Ser423, Thr431–Phe451, Met465–Leu485, and Leu492–Pro512. The segment at Glu521–Asp547 is disordered.

It belongs to the major facilitator (TC 2.A.1) superfamily. Organic cation transporter (TC 2.A.1.19) family.

It is found in the basolateral cell membrane. It localises to the apical cell membrane. Its subcellular location is the cell membrane. The catalysed reaction is orotate(out) + L-glutamate(in) = orotate(in) + L-glutamate(out). The enzyme catalyses 3',5'-cyclic GMP(in) = 3',5'-cyclic GMP(out). It carries out the reaction GMP(in) = GMP(out). It catalyses the reaction 2'-deoxyguanosine(in) = 2'-deoxyguanosine(out). The catalysed reaction is GDP(in) = GDP(out). The enzyme catalyses guanosine(in) = guanosine(out). It carries out the reaction GTP(in) = GTP(out). It catalyses the reaction 3',5'-cyclic AMP(in) = 3',5'-cyclic AMP(out). The catalysed reaction is creatinine(in) = creatinine(out). The enzyme catalyses prostaglandin E2(out) = prostaglandin E2(in). It carries out the reaction 2-oxoglutarate(in) = 2-oxoglutarate(out). It catalyses the reaction glutarate(in) = glutarate(out). The catalysed reaction is urate(out) = urate(in). The enzyme catalyses estrone 3-sulfate(out) = estrone 3-sulfate(in). Functions as a Na(+)-independent bidirectional multispecific transporter. Contributes to the renal and hepatic elimination of endogenous organic compounds from the systemic circulation into the urine and bile, respectively. Capable of transporting a wide range of purine and pyrimidine nucleobases, nucleosides and nucleotides, with cGMP, 2'deoxyguanosine and GMP being the preferred substrates. Functions as a pH- and chloride-independent cGMP bidirectional facilitative transporter that can regulate both intracellular and extracellular levels of cGMP and may be involved in cGMP signaling pathways. Mediates orotate/glutamate bidirectional exchange and most likely display a physiological role in hepatic release of glutamate into the blood. Involved in renal secretion and possible reabsorption of creatinine. Able to uptake prostaglandin E2 (PGE2) and may contribute to PGE2 renal excretion. Also transports alpha-ketoglutarate and urate. Apart from the orotate/glutamate exchange, the counterions for the uptake of other SLC22A7/OAT2 substrates remain to be identified. This is Solute carrier family 22 member 7 (SLC22A7) from Bos taurus (Bovine).